The primary structure comprises 281 residues: Insecticidal crystal toxin protein (281 aa).

Antigenic epitope regions lie at residues 54 to 78 (NYSHILSFIKSLSIPATYKTQVYTF), 91 to 104 (IYTHLTTQIPAVKA), 108 to 116 (GTASKVVQG), 131 to 148 (FKITCQHSNFQQSYFIRI), 160 to 172 (AVINLSIPGVAEL), 189 to 196 (KYKDFQYL), 208 to 216 (QNISLVFNR), 221 to 236 (TNTTVLIDKIEFLPIT), and 247 to 256 (KLETVQQIIN).

This sequence belongs to the delta endotoxin family.

Promotes colloidosmotic lysis by binding to the midgut epithelial cells of insects. Active against Mamestra brassicae. This is Insecticidal crystal toxin protein from Bacillus thuringiensis subsp. kurstaki.